Reading from the N-terminus, the 45-residue chain is Defensin Tk-AMP-D4 (45 aa).

4 cysteine pairs are disulfide-bonded: Cys3/Cys45, Cys14/Cys34, Cys20/Cys39, and Cys24/Cys41.

In terms of biological role, plant defense peptide. The sequence is that of Defensin Tk-AMP-D4 from Triticum kiharae (Wheat).